Consider the following 178-residue polypeptide: Large ribosomal subunit protein uL6 (178 aa).

This sequence belongs to the universal ribosomal protein uL6 family. Part of the 50S ribosomal subunit.

In terms of biological role, this protein binds to the 23S rRNA, and is important in its secondary structure. It is located near the subunit interface in the base of the L7/L12 stalk, and near the tRNA binding site of the peptidyltransferase center. In Streptococcus agalactiae serotype V (strain ATCC BAA-611 / 2603 V/R), this protein is Large ribosomal subunit protein uL6.